The primary structure comprises 584 residues: tRNA-guanine(15) transglycosylase (584 aa).

Asp95 functions as the Nucleophile in the catalytic mechanism. Substrate contacts are provided by Asp130 and Gly196. Positions 279, 281, and 284 each coordinate Zn(2+). The PUA domain maps to 507-582 (RMRVVVSEEA…RAVKVRRGIS (76 aa)).

It belongs to the archaeosine tRNA-ribosyltransferase family. The cofactor is Zn(2+).

The catalysed reaction is guanosine(15) in tRNA + 7-cyano-7-deazaguanine = 7-cyano-7-carbaguanosine(15) in tRNA + guanine. It functions in the pathway tRNA modification; archaeosine-tRNA biosynthesis. In terms of biological role, exchanges the guanine residue with 7-cyano-7-deazaguanine (preQ0) at position 15 in the dihydrouridine loop (D-loop) of archaeal tRNAs. The protein is tRNA-guanine(15) transglycosylase of Pyrococcus abyssi (strain GE5 / Orsay).